An 89-amino-acid chain; its full sequence is Putative regulatory protein CPE1749 (89 aa).

It belongs to the RemA family.

The sequence is that of Putative regulatory protein CPE1749 from Clostridium perfringens (strain 13 / Type A).